The chain runs to 2301 residues: MACKHGYPDVCPICTAVDVTPGFEYLLLADGEWFPTDLLCVDLDDDVFWPSNSSNQSETMEWTDLPLVRDIVMEPQGNASSSDKSNSQSSGNEGVIINNFYSNQYQNSIDLSASGGNAGDAPQNNGQLSNILGGAANAFATMAPLLLDQNTEEMENLSDRVASDKAGNSATNTQSTVGRLCGYGEAHHGEHPASCADTATDKVLAAERYYTIDLASWTTTQEAFSHIRIPLPHVLAGEDGGVFGATLRRHYLCKTGWRVQVQCNASQFHAGSLLVFMAPEFYTGKGTKTGDMEPTDPFTMDTTWRAPQGAPTGYRYDSRTGFFAMNHQNQWQWTVYPHQILNLRTNTTVDLEVPYVNIAPTSSWTQHANWTLVVAVFSPLQYASGSSSDVQITASIQPVNPVFNGLRHETVIAQSPIAVTVREHKGCFYSTNPDTTVPIYGKTISTPNDYMCGEFSDLLELCKLPTFLGNPNSNNKRYPYFSATNSVPTTSLVDYQVALSCSCMCNSMLAAVARNFNQYRGSLNFLFVFTGAAMVKGKFLIAYTPPGAGKPTTRDQAMQATYAIWDLGLNSSFVFTAPFISPTHYRQTSYTSATIASVDGWVTVWQLTPLTYPSGAPVNSDILTLVSAGDDFTLRMPISPTKWAPQGSDNAEKGKVSNDDASVDFVAEPVKLPENQTRVAFFYDRAVPIGMLRPGQNIESTFVYQENDLRLNCLLLTPLPSFCPDSTSGPVKTKAPVQWRWVRSGGTTNFPLMTKQDYAFLCFSPFTYYKCDLEVTVSALGTDTVASVLRWAPTGAPADVTDQLIGYTPSLGETRNPHMWLVGAGNTQISFVVPYNSPLSVLPAAWFNGWSDFGNTKDFGVAPNADFGRLWIQGNTSASVRIRYKKMKVFCPRPTLFFPWPVSTRSKINADNPVPILELENPAAFYRIDLFITFIDEFITFDYKVHGRPVLTFRIPGFGLTPAGRMLVCMGEKPAHGPFTSSRSLYHVIFTATCSSFSFSIYKGRYRSWKKPIHDELVDRGYTTFGEFFRAVRAYHADYYKQRLIHDVEMNPGPVQSVFQPQGAVLTKSLAPQAGIQNLLLRLLGIDGDCSEVSKAITVVTDLFAAWERAKTTLVSPEFWSKLILKTTKFIAASVLYLHNPDFTTTVCLSLMTGVDLLTNDSVFDWLKNKLSSFFRTPPPVCPNVLQPQGPLREANEGFTFAKNIEWAMKTIQSIVNWLTSWFKQEEDHPQSKLDKFLMEFPDHCRNIMDMRNGRKAYCECTASFKYFDELYNLAVTCKRIPLASLCEKFKNRHDHSVTRPEPVVVVLRGAAGQGKSVTSQIIAQSVSKMAFGRQSVYSMPPDSEYFDGYENQFSVIMDDLGQNPDGEDFTVFCQMVSSTNFLPNMAHLERKGTPFTSSFIVATTNLPKFRPVTVAHYPAVDRRITFDFTVTAGPHCTTSNGMLDIEKAFDEIPGSKPQLACFSADCPLLHKRGVMFTCNRTKAVYNLQQVVKMVNDTITRKTENVKKMNSLVAQSPPDWEHFENILTCLRQNNAALQDQLDELQEAFAQARERSDFLSDWLKVSAIIFAGIASLSAVIKLASKFKESIWPSPVRVELSEGEQAAYAGRARAQKQALQVLDIQGGGKVLAQAGNPVMDFELFCAKNMVAPITFYYPDKAEVTQSCLLLRAHLFVVNRHVAETEWTAFKLKDVRHERDTVVTRSVNRSGAETDLTFIKVTKGPLFKDNVNKFCSNKDDFPARNDAVTGIMNTGLAFVYSGNFLIGNQPVNTTTGACFNHCLHYRAQTRRGWCGSAVICNVNGKKAVYGMHSAGGGGLAAATIITRELIEAAEKSMLALEPQGAIVDISTGSVVHVPRKTKLRRTVAHDVFQPKFEPAVLSRYDPRTDKDVDVVAFSKHTTNMESLPPVFDIVCDEYANRVFTILGKDNGLLTVEQAVLGLPGMDPMEKDTSPGLPYTQQGLRRTDLLNFNTAKMTPQLDYAHSKLVLGVYDDVVYQSFLKDEIRPLEKIHEAKTRIVDVPPFAHCIWGRQLLGRFASKFQTKPGLELGSAIGTDPDVDWTPYAAELSGFNYVYDVDYSNFDASHSTAMFECLIKNFFTEQNGFDRRIAEYLRSLAVSRHAYEDRRVLIRGGLLSGCAATSMLNTIMNNVIIRAALYLTYSNFEFDDIKVLSYGDDLLIGTNYQIDFNLVKERLAPFGYKITPANKTTTFPLTSHLQDVTFLKRRFVRFNSYLFRPQMDAVNLKAMVSYCKPGTLKEKLMSIALLAVHSGPDIYDEIFLPFRNVGIVVPTYSSMLYRWLSLFR.

A zinc finger spans residues 3–14 (CKHGYPDVCPIC). Positions 30–46 (DGEWFPTDLLCVDLDDD) are acidic. The theilo stretch occupies residues 60-73 (MEWTDLPLVRDIVM). Residue Gly-77 is the site of N-myristoyl glycine; by host attachment. A disulfide bridge connects residues Cys-501 and Cys-503. The segment at 1039–1045 (YYKQRLI) is host EIF4E binding. An SF3 helicase domain is found at 1281–1446 (IPLASLCEKF…CTTSNGMLDI (166 aa)). Position 1310–1317 (1310–1317 (GAAGQGKS)) interacts with ATP. Tyr-1606 is modified (O-(5'-phospho-RNA)-tyrosine). One can recognise a Peptidase C3 domain in the interval 1634–1827 (NPVMDFELFC…AATIITRELI (194 aa)). Active-site for protease 3C activity residues include His-1678, Asp-1712, and Cys-1791. Residues 2069 to 2187 (NYVYDVDYSN…GTNYQIDFNL (119 aa)) enclose the RdRp catalytic domain. Active-site for RdRp activity residues include Asp-2075 and Asp-2173.

This sequence belongs to the picornaviruses polyprotein family. Interacts with host EIF4E. Interacts with the leader protein. In terms of assembly, interacts with host RAN; the complex L-RAN recruits cellular kinases responsible for the L-induced nucleocytoplasmic trafficking inhibition. The complex L-RAN can further bind to the host exportins XPO1/CRM1 and CSE1L/CAS. Interacts with the protein 2A. Interacts with host RNASEL; this interaction prevents RNASEL activation by its substrate 2'-5' oligoadenylates. Phosphorylated. Post-translationally, specific enzymatic cleavages by the viral protease in vivo yield a variety of precursors and mature proteins. The polyprotein seems to be cotranslationally cleaved at the 2A/2B junction by a ribosomal skip from one codon to the next without formation of a peptide bond. This process would release the P1-2A peptide from the translational complex. In terms of processing, during virion maturation, immature virions are rendered infectious following cleavage of VP0 into VP4 and VP2. This maturation seems to be an autocatalytic event triggered by the presence of RNA in the capsid and is followed by a conformational change of the particle. Uridylylated by the polymerase and is covalently linked to the 5'-end of genomic RNA. This uridylylated form acts as a nucleotide-peptide primer for the polymerase. Post-translationally, myristoylation is required during RNA encapsidation and formation of the mature virus particle.

Its subcellular location is the virion. It localises to the host cytoplasm. It is found in the host nucleus. The protein resides in the host nucleolus. The protein localises to the host cytoplasmic vesicle membrane. The enzyme catalyses RNA(n) + a ribonucleoside 5'-triphosphate = RNA(n+1) + diphosphate. It catalyses the reaction ATP + H2O = ADP + phosphate + H(+). It carries out the reaction Selective cleavage of Gln-|-Gly bond in the poliovirus polyprotein. In other picornavirus reactions Glu may be substituted for Gln, and Ser or Thr for Gly.. Functionally, forms a complex with host RAN and probably binds to exportins carrying activated MAPK in order to mediate the hyperphosphorylation of host Phe/Gly containing nuclear pore proteins (Nups) resulting in cessation of active nucleocytoplasmic transport. Proteins with NLS signals fail to import, cellular mRNAs fail to export, and some proteins small enough for diffusion are not retained anymore (efflux). The resulting inhibition of cellular protein synthesis serves to ensure maximal viral gene expression and to evade host immune response. The leader protein also inhibits host interferon regulatory factor 3 (IRF3) dimerization, thereby blocking the transcriptional activation of IFN genes. Binds to host RNase L thereby preventing its activation by 2'-5' oligoadenylates in order to counteract the antiviral interferon-inducible OAS/RNase L pathway. Its function is as follows. Forms an icosahedral capsid of pseudo T=3 symmetry with capsid proteins VP2 and VP3. Together they form an icosahedral capsid composed of 60 copies of each VP1, VP2, and VP3, with a diameter of approximately 300 Angstroms. VP4 lies on the inner surface of the protein shell formed by VP1, VP2 and VP3. All the three latter proteins contain a beta-sheet structure called beta-barrel jelly roll. VP1 is situated at the 12 fivefold axes, whereas VP2 and VP3 are located at the quasi-sixfold axes. In terms of biological role, lies on the inner surface of the capsid shell. After binding to the host receptor, the capsid undergoes conformational changes. Capsid protein VP4 is released, capsid protein VP1 N-terminus is externalized, and together, they shape a pore in the host membrane through which the viral genome is translocated into the host cell cytoplasm. After genome has been released, the channel shrinks. VP0 precursor is a component of immature procapsids. Functionally, involved in host translation shutoff by inhibiting cap-dependent mRNA translation. Nuclear localization is required for this function. The resulting inhibition of cellular protein synthesis serves to ensure maximal viral gene expression and to evade host immune response. Inhibits the phosphorylation of the leader protein. Its function is as follows. Affects membrane integrity and causes an increase in membrane permeability. In terms of biological role, associates with and induces structural rearrangements of intracellular membranes. It displays RNA-binding, nucleotide binding and NTPase activities. Serves as membrane anchor via its hydrophobic domain. Functionally, forms a primer, VPg-pU, which is utilized by the polymerase for the initiation of RNA chains. Its function is as follows. Cysteine protease that generates mature viral proteins from the precursor polyprotein. In addition to its proteolytic activity, it binds to viral RNA, and thus influences viral genome replication. RNA and substrate cooperatively bind to the protease. Cleaves host PABP1, this cleavage is important for viral replication. In terms of biological role, replicates the genomic and antigenomic RNAs by recognizing replications specific signals. Performs VPg uridylylation. The polypeptide is Genome polyprotein (Theiler's murine encephalomyelitis virus (strain DA) (TMEV)).